Reading from the N-terminus, the 243-residue chain is I/6 autoantigen (243 aa).

The 36-residue stretch at 110–145 (LSVEEVDALFNALDSDNRGYVSVDEFMDALYGEEGR) folds into the EF-hand domain. The segment at 166-243 (PSWRMRPTPK…PPKQKAGCGC (78 aa)) is disordered. Over residues 176-196 (PTRKLRQKRKREQGQKRKQGQ) the composition is skewed to basic residues. 6 consecutive repeat copies span residues 181–188 (RQKRKREQ), 189–196 (GQKRKQGQ), 197–204 (RQKQEQGQ), 205–212 (RQKREQGQ), 213–220 (RQKQEQGQ), and 221–228 (KRKRERGG). Positions 181 to 228 (RQKRKREQGQKRKQGQRQKQEQGQRQKREQGQRQKQEQGQKRKRERGG) are 6 X 8 AA tandem repeats. Positions 198-220 (QKQEQGQRQKREQGQRQKQEQGQ) are enriched in basic and acidic residues.

It localises to the cytoplasm. Its subcellular location is the cytoskeleton. Its function is as follows. Microtubule-associated protein that may be involved in cross-linking microtubules. The protein is I/6 autoantigen of Trypanosoma brucei brucei.